The chain runs to 495 residues: ATP synthase subunit beta, chloroplastic (495 aa).

172–179 (GGAGVGKT) contributes to the ATP binding site.

Belongs to the ATPase alpha/beta chains family. F-type ATPases have 2 components, CF(1) - the catalytic core - and CF(0) - the membrane proton channel. CF(1) has five subunits: alpha(3), beta(3), gamma(1), delta(1), epsilon(1). CF(0) has four main subunits: a(1), b(1), b'(1) and c(9-12).

The protein localises to the plastid. It localises to the chloroplast thylakoid membrane. The catalysed reaction is ATP + H2O + 4 H(+)(in) = ADP + phosphate + 5 H(+)(out). In terms of biological role, produces ATP from ADP in the presence of a proton gradient across the membrane. The catalytic sites are hosted primarily by the beta subunits. The protein is ATP synthase subunit beta, chloroplastic of Bowiea volubilis (Climbing onion).